Consider the following 394-residue polypeptide: Elongation factor Tu (394 aa).

The tr-type G domain occupies 10 to 204 (KPHVNVGTIG…AVDEWIPTPE (195 aa)). The G1 stretch occupies residues 19 to 26 (GHIDHGKT). A GTP-binding site is contributed by 19–26 (GHIDHGKT). Mg(2+) is bound at residue T26. Residues 60–64 (GITIN) are G2. Residues 81 to 84 (DCPG) form a G3 region. GTP contacts are provided by residues 81–85 (DCPGH) and 136–139 (NKCD). Residues 136–139 (NKCD) are G4. The interval 174-176 (SAL) is G5.

This sequence belongs to the TRAFAC class translation factor GTPase superfamily. Classic translation factor GTPase family. EF-Tu/EF-1A subfamily. In terms of assembly, monomer.

The protein localises to the cytoplasm. It carries out the reaction GTP + H2O = GDP + phosphate + H(+). In terms of biological role, GTP hydrolase that promotes the GTP-dependent binding of aminoacyl-tRNA to the A-site of ribosomes during protein biosynthesis. The chain is Elongation factor Tu from Mycoplasma pneumoniae (strain ATCC 29342 / M129 / Subtype 1) (Mycoplasmoides pneumoniae).